Consider the following 276-residue polypeptide: Malectin-B (276 aa).

The first 26 residues, 1 to 26 (MLSIRTVLGPLAAILLTVIGPFGAHG), serve as a signal peptide directing secretion. The Lumenal portion of the chain corresponds to 27–253 (SGLADKVMWA…TPNPYASDNS (227 aa)). A carbohydrate contacts are provided by Y67, Y89, Y116, F117, and D186. A disordered region spans residues 202–249 (DVPQLQPHPGLEKKEEEEEEEEEEGSPSKKQSNKNRVQSGPRTPNPYA). A compositionally biased stretch (acidic residues) spans 216–226 (EEEEEEEEEEG). Polar residues predominate over residues 229–249 (SKKQSNKNRVQSGPRTPNPYA). A glycan (N-linked (GlcNAc...) asparagine) is linked at N252. Residues 254–274 (SLMFPILVAFGVFIPTLFCLC) traverse the membrane as a helical segment. The Cytoplasmic portion of the chain corresponds to 275-276 (RL).

The protein belongs to the malectin family.

It is found in the endoplasmic reticulum membrane. Carbohydrate-binding protein with a strong ligand preference for Glc2-N-glycan. May play a role in the early steps of protein N-glycosylation. Can bind di- or higher oligomers but not monomers of glucose, including maltose, maltotriose, maltotetraose, maltoheptaose, nigerose, kojibose, cellobiose and isomaltose, although based on their subcellular locations, these are unlikely to all be physiological ligands. The sequence is that of Malectin-B from Xenopus laevis (African clawed frog).